Reading from the N-terminus, the 81-residue chain is uncharacterized protein (81 aa).

This is an uncharacterized protein from Homo sapiens (Human).